Here is a 575-residue protein sequence, read N- to C-terminus: UvrABC system protein C (575 aa).

The 79-residue stretch at 16–94 (SQPGVYRMYD…IKLYQPRYNV (79 aa)) folds into the GIY-YIG domain. Residues 204–239 (DQVLTQLISRMETASQNLEFEEAARIRDQIQAVRRV) enclose the UVR domain.

Belongs to the UvrC family. Interacts with UvrB in an incision complex.

The protein localises to the cytoplasm. In terms of biological role, the UvrABC repair system catalyzes the recognition and processing of DNA lesions. UvrC both incises the 5' and 3' sides of the lesion. The N-terminal half is responsible for the 3' incision and the C-terminal half is responsible for the 5' incision. This is UvrABC system protein C from Shigella dysenteriae serotype 1 (strain Sd197).